A 934-amino-acid polypeptide reads, in one-letter code: Serine/threonine-protein kinase atg1 (934 aa).

One can recognise a Protein kinase domain in the interval 22–328 (YTRLDEIGRG…SDFFDCDTIT (307 aa)). ATP contacts are provided by residues 28 to 36 (IGRGSFATV) and K51. D165 serves as the catalytic Proton acceptor. Disordered regions lie at residues 335–432 (IADD…PRRP), 462–481 (RNTY…TKEE), 531–580 (RRPG…YGQS), 684–703 (TDPS…TDLT), 800–822 (RLPP…GSGA), and 878–900 (EEEE…RRDG). Over residues 340-368 (PSTSRRSSVAVNTSGSTSRPQSRTGSRTP) the composition is skewed to polar residues. The segment covering 371–386 (MKREKDASYPGKKDDQ) has biased composition (basic and acidic residues). The span at 538–550 (SSTATATSPLATT) shows a compositional bias: low complexity. Basic and acidic residues predominate over residues 561-577 (ARADSTHTRQGSYERRY).

This sequence belongs to the protein kinase superfamily. Ser/Thr protein kinase family. APG1/unc-51/ULK1 subfamily. As to quaternary structure, homodimer. Forms a ternary complex with ATG13 and ATG17.

The protein localises to the cytoplasm. It localises to the preautophagosomal structure membrane. It carries out the reaction L-seryl-[protein] + ATP = O-phospho-L-seryl-[protein] + ADP + H(+). The catalysed reaction is L-threonyl-[protein] + ATP = O-phospho-L-threonyl-[protein] + ADP + H(+). In terms of biological role, serine/threonine protein kinase involved in the cytoplasm to vacuole transport (Cvt) and found to be essential in autophagy, where it is required for the formation of autophagosomes. Involved in the clearance of protein aggregates which cannot be efficiently cleared by the proteasome. Required for selective autophagic degradation of the nucleus (nucleophagy) as well as for mitophagy which contributes to regulate mitochondrial quantity and quality by eliminating the mitochondria to a basal level to fulfill cellular energy requirements and preventing excess ROS production. Also involved in endoplasmic reticulum-specific autophagic process, in selective removal of ER-associated degradation (ERAD) substrates. Plays a key role in ATG9 and ATG23 cycling through the pre-autophagosomal structure and is necessary to promote ATG18 binding to ATG9 through phosphorylation of ATG9. Catalyzes phosphorylation of ATG4, decreasing the interaction between ATG4 and ATG8 and impairing deconjugation of PE-conjugated forms of ATG8. Required for conidiation and development of aerial hyphae. The protein is Serine/threonine-protein kinase atg1 of Aspergillus oryzae (strain ATCC 42149 / RIB 40) (Yellow koji mold).